The sequence spans 225 residues: Protein-L-isoaspartate O-methyltransferase (225 aa).

Residue Ser75 is part of the active site.

It belongs to the methyltransferase superfamily. L-isoaspartyl/D-aspartyl protein methyltransferase family.

The protein resides in the cytoplasm. The enzyme catalyses [protein]-L-isoaspartate + S-adenosyl-L-methionine = [protein]-L-isoaspartate alpha-methyl ester + S-adenosyl-L-homocysteine. Catalyzes the methyl esterification of L-isoaspartyl residues in peptides and proteins that result from spontaneous decomposition of normal L-aspartyl and L-asparaginyl residues. It plays a role in the repair and/or degradation of damaged proteins. In Xanthomonas axonopodis pv. citri (strain 306), this protein is Protein-L-isoaspartate O-methyltransferase.